The primary structure comprises 221 residues: MPKLTWQLLLSQEKNLPYFKNIFTILNQQKKSGKIIYPKQNDIFNVFRFTAFESIKVVIIGQDPYHGYNQAHGLAFSVPHGIPLPPSLKNIYKELETDIPGFIKPQHGCLSSWSKEGVFLLNSILTVEQGKSRSHAHIGWELFTDKVIHTLNTYRQNLVFLLWGKHAQQKSHIINNQKHHILITSHPSPISAKYGFLGCKHFSKTNTFLANQNQHIINWQL.

Residue aspartate 63 is the Proton acceptor of the active site.

This sequence belongs to the uracil-DNA glycosylase (UDG) superfamily. UNG family.

The protein resides in the cytoplasm. The enzyme catalyses Hydrolyzes single-stranded DNA or mismatched double-stranded DNA and polynucleotides, releasing free uracil.. Its function is as follows. Excises uracil residues from the DNA which can arise as a result of misincorporation of dUMP residues by DNA polymerase or due to deamination of cytosine. This chain is Uracil-DNA glycosylase, found in Blochmanniella floridana.